The following is a 225-amino-acid chain: Uracil-DNA glycosylase (225 aa).

The active-site Proton acceptor is Asp-64.

This sequence belongs to the uracil-DNA glycosylase (UDG) superfamily. UNG family.

Its subcellular location is the cytoplasm. The catalysed reaction is Hydrolyzes single-stranded DNA or mismatched double-stranded DNA and polynucleotides, releasing free uracil.. In terms of biological role, excises uracil residues from the DNA which can arise as a result of misincorporation of dUMP residues by DNA polymerase or due to deamination of cytosine. The chain is Uracil-DNA glycosylase from Lachnoclostridium phytofermentans (strain ATCC 700394 / DSM 18823 / ISDg) (Clostridium phytofermentans).